The chain runs to 342 residues: Dihydroorotase (342 aa).

Positions 13 and 15 each coordinate Zn(2+). Residues 15–17 (HLR) and Asn-41 contribute to the substrate site. Zn(2+) is bound by residues Lys-98, His-135, and His-173. N6-carboxylysine is present on Lys-98. His-135 contacts substrate. Leu-218 serves as a coordination point for substrate. Asp-246 is a binding site for Zn(2+). The active site involves Asp-246. Positions 250 and 262 each coordinate substrate.

The protein belongs to the metallo-dependent hydrolases superfamily. DHOase family. Class II DHOase subfamily. Homodimer. It depends on Zn(2+) as a cofactor.

It catalyses the reaction (S)-dihydroorotate + H2O = N-carbamoyl-L-aspartate + H(+). The protein operates within pyrimidine metabolism; UMP biosynthesis via de novo pathway; (S)-dihydroorotate from bicarbonate: step 3/3. In terms of biological role, catalyzes the reversible cyclization of carbamoyl aspartate to dihydroorotate. The sequence is that of Dihydroorotase from Vibrio campbellii (strain ATCC BAA-1116).